The chain runs to 172 residues: Translationally-controlled tumor protein homolog (172 aa).

A TCTP domain is found at 1-172; the sequence is MIIYKDCITE…FKDGLIIEKC (172 aa).

The protein belongs to the TCTP family.

The protein resides in the cytoplasm. Its function is as follows. Involved in calcium binding and microtubule stabilization. This is Translationally-controlled tumor protein homolog (tpt1) from Xenopus laevis (African clawed frog).